Here is a 475-residue protein sequence, read N- to C-terminus: D-lactate dehydrogenase (475 aa).

In terms of domain architecture, FAD-binding PCMH-type spans 43–222; that stretch reads YGKARPEVLV…TELTLKVIPA (180 aa).

The protein belongs to the FAD-binding oxidoreductase/transferase type 4 family. Requires FAD as cofactor. It depends on Zn(2+) as a cofactor.

It catalyses the reaction (R)-lactate + A = pyruvate + AH2. Its function is as follows. Catalyzes the dehydrogenation of (R)-lactate (D-lactate) to pyruvate. Active in vitro with the artificial electron acceptor 2,6-dichlorophenolindophenol (DCPIP), but not with NAD, NADP, or cytochrome c. Also displays a very low oxidase activity in vitro on D-lactate and L-lactate with O2 as the electron acceptor, but this activity is most likely not physiological. The protein is D-lactate dehydrogenase of Anaerostipes hadrus.